We begin with the raw amino-acid sequence, 262 residues long: Nitrilase (262 aa).

The 236-residue stretch at 2–237 (VKVAYVQMNP…EEVGVAEIDL (236 aa)) folds into the CN hydrolase domain. Glu-42 serves as the catalytic Proton acceptor. Lys-113 serves as the catalytic Proton donor. Cys-146 functions as the Nucleophile in the catalytic mechanism. 173–174 (VM) contributes to the substrate binding site.

Belongs to the carbon-nitrogen hydrolase superfamily. Homodimer.

The catalysed reaction is a nitrile + 2 H2O = a carboxylate + NH4(+). With respect to regulation, enzymatic activity is inhibited in the presence of acetone, methanol and metal ions such as Ag(2+) and Hg(2+). Is also inhibited by various thiol reagents such as DTNB, p-chloromercuribenzoate, p-hydroxymercuribenzoate, iodacetamide and iodacetate. EDTA has no influence on activity. Functionally, nitrilase that hydrolyzes preferentially aliphatic nitriles like malononitrile and fumaronitrile in vitro. These dinitriles are converted to the corresponding monoacid mononitriles, showing the enzyme is regioselective. Cannot hydrolyze compounds with a nitrile group bound to an aromatic ring or amino acid. Its biological role is unknown. The chain is Nitrilase from Pyrococcus abyssi (strain GE5 / Orsay).